The chain runs to 237 residues: Fluoroquinolones export permease protein MT2761 (237 aa).

6 helical membrane-spanning segments follow: residues 20 to 40 (FLHA…PMPV), 49 to 69 (YVLV…TVFF), 96 to 116 (VLLA…HGLG), 119 to 139 (LLPL…VGFS), 147 to 167 (VTDW…PPVV), and 199 to 219 (LAPW…AGLC).

As to quaternary structure, the complex is composed of 2 ATP-binding proteins and 2 transmembrane proteins.

The protein resides in the cell membrane. In terms of biological role, part of the ABC transporter complex involved in fluoroquinolones export. Probably responsible for the translocation of the substrate across the membrane. The protein is Fluoroquinolones export permease protein MT2761 of Mycobacterium tuberculosis (strain CDC 1551 / Oshkosh).